A 282-amino-acid polypeptide reads, in one-letter code: Ribonuclease 3 (282 aa).

Residues 18–141 (FVAFFKSLNI…LVAAIYEDLG (124 aa)) form the RNase III domain. Glutamate 59 serves as a coordination point for Mg(2+). Aspartate 63 is an active-site residue. Aspartate 127 and glutamate 130 together coordinate Mg(2+). Residue glutamate 130 is part of the active site.

The protein belongs to the ribonuclease III family. In terms of assembly, homodimer. The cofactor is Mg(2+).

Its subcellular location is the cytoplasm. The enzyme catalyses Endonucleolytic cleavage to 5'-phosphomonoester.. Its function is as follows. Digests double-stranded RNA. Involved in the processing of primary rRNA transcript to yield the immediate precursors to the large and small rRNAs (23S and 16S). Processes some mRNAs, and tRNAs when they are encoded in the rRNA operon. Processes pre-crRNA and tracrRNA of type II CRISPR loci if present in the organism. The sequence is that of Ribonuclease 3 from Mycoplasmoides pneumoniae (strain ATCC 15531 / DSM 23978 / CIP 103766 / NBRC 14401 / NCTC 10119 / FH) (Mycoplasma pneumoniae).